Here is a 68-residue protein sequence, read N- to C-terminus: Large ribosomal subunit protein uL29 (68 aa).

It belongs to the universal ribosomal protein uL29 family.

This Chloroflexus aurantiacus (strain ATCC 29364 / DSM 637 / Y-400-fl) protein is Large ribosomal subunit protein uL29.